A 152-amino-acid chain; its full sequence is Superoxide dismutase [Cu-Zn] (152 aa).

Cu cation contacts are provided by His-45, His-47, and His-62. Cys-56 and Cys-145 are oxidised to a cystine. Positions 62, 70, 79, and 82 each coordinate Zn(2+). Residue His-119 participates in Cu cation binding.

The protein belongs to the Cu-Zn superoxide dismutase family. In terms of assembly, homodimer. The cofactor is Cu cation. It depends on Zn(2+) as a cofactor.

The protein localises to the cytoplasm. It carries out the reaction 2 superoxide + 2 H(+) = H2O2 + O2. In terms of biological role, destroys radicals which are normally produced within the cells and which are toxic to biological systems. The protein is Superoxide dismutase [Cu-Zn] (SODCC) of Pisum sativum (Garden pea).